The primary structure comprises 546 residues: Cytochrome P450 monooxygenase fumoB (546 aa).

A helical membrane pass occupies residues 13–33 (LGYYEKLAGILGIIGLVLLFW). Residue asparagine 147 is glycosylated (N-linked (GlcNAc...) asparagine). A heme-binding site is contributed by cysteine 488.

This sequence belongs to the cytochrome P450 family. Heme serves as cofactor.

The protein resides in the membrane. It functions in the pathway secondary metabolite biosynthesis. In terms of biological role, cytochrome P450 monooxygenase; part of the gene cluster that mediates the biosynthesis of fumosorinone, a 2-pyridone alkaloid that acts as an inhibitor of protein tyrosine phosphatase 1B which is implicated asa negative regulator of insulin receptor signaling and a potential drug target for the treatment of type II diabetes and other associated metabolic syndromes. The polyketide-amino acid backbone of fumosorinone is first assembled by the PKS-NRPS hybrid fumoS. The PKS modules condense one acetyl-CoA starter unit with 7 malonyl-CoA units, programmed C-methylations occurring after the first 3 and the sixth extensions, and cycles of full reduction occurring after the first 2 extensions. Because fumoS lacks a designated enoyl reductase (ER) domain, the required activity is provided the enoyl reductase fumoC. Upon formation of the polyketide backbone on the thiotemplate, the polyketide is transferred to the NRPS module and linked to tyrosine to produce the acyltetramic acid intermediate called prefumosorinone A. The cytochrome P450 monooxygenase fumoA then probably catalyzes an unprecedented oxidative ring expansion of prefumosorinone A to form prefumosorinone B which contains the 2-pyridone core of fumosorinone. The cytochrome P450 monooxygenase fumoB might hydroxylate the nitrogen of prefumosorinone B, but not the acyltetramic acid prefumosorinone A, to form fumosorinone. This Cordyceps fumosorosea (strain ARSEF 2679) (Isaria fumosorosea) protein is Cytochrome P450 monooxygenase fumoB.